Here is a 158-residue protein sequence, read N- to C-terminus: Small ribosomal subunit protein uS19 (158 aa).

The protein belongs to the universal ribosomal protein uS19 family.

Its function is as follows. Protein S19 forms a complex with S13 that binds strongly to the 16S ribosomal RNA. This Pyrobaculum aerophilum (strain ATCC 51768 / DSM 7523 / JCM 9630 / CIP 104966 / NBRC 100827 / IM2) protein is Small ribosomal subunit protein uS19.